Consider the following 151-residue polypeptide: Probable chemoreceptor glutamine deamidase CheD (151 aa).

It belongs to the CheD family.

It carries out the reaction L-glutaminyl-[protein] + H2O = L-glutamyl-[protein] + NH4(+). Functionally, probably deamidates glutamine residues to glutamate on methyl-accepting chemotaxis receptors (MCPs), playing an important role in chemotaxis. In Methanosarcina barkeri (strain Fusaro / DSM 804), this protein is Probable chemoreceptor glutamine deamidase CheD.